A 99-amino-acid chain; its full sequence is Class II hydrophobin 1 (99 aa).

Residues 1-26 form the signal peptide; that stretch reads MKFIAVVAALTASLAMAAPTESSTDT. 4 disulfide bridges follow: cysteine 31-cysteine 80, cysteine 41-cysteine 71, cysteine 42-cysteine 54, and cysteine 81-cysteine 92.

This sequence belongs to the cerato-ulmin hydrophobin family. Homotetramer. Further self-assembles to form highly ordered films at water-air interfaces through intermolecular interactions.

The protein localises to the secreted. The protein resides in the cell wall. In terms of biological role, aerial growth, conidiation, and dispersal of filamentous fungi in the environment rely upon a capability of their secreting small amphipathic proteins called hydrophobins (HPBs) with low sequence identity. Class I can self-assemble into an outermost layer of rodlet bundles on aerial cell surfaces, conferring cellular hydrophobicity that supports fungal growth, development and dispersal; whereas Class II form highly ordered films at water-air interfaces through intermolecular interactions but contribute nothing to the rodlet structure. HFB1 is a class II hydrophobin that shows antifungal activity against pathogenic and opportunistic fungi such as Cryptococcus neoformans, Nakaseomyces glabrataa, or Candida tropicalis. In Sodiomyces alkalinus (strain CBS 110278 / VKM F-3762 / F11) (Alkaliphilic filamentous fungus), this protein is Class II hydrophobin 1.